The primary structure comprises 259 residues: DNA-directed RNA polymerase 30 kDa polypeptide (259 aa).

The segment at Tyr-155–Lys-195 adopts a TFIIS-type zinc-finger fold. Residues Cys-159, Cys-162, Cys-187, and Cys-190 each coordinate Zn(2+). A disordered region spans residues Glu-214–Glu-259. Residues Asn-226–Ala-236 show a composition bias toward pro residues.

The protein belongs to the poxviridae DNA-directed RNA polymerase 30 kDa subunit family. In terms of assembly, the DNA-dependent RNA polymerase (vRNAP) consists of eight subunits encoded by early viral genes and termed according to their apparent molecular masses Rpo147, Rpo132, Rpo35, Rpo30, Rpo22, Rpo19, Rpo18, and Rpo7. The same holoenzyme, with the addition of the transcription-specificity factor RAP94, is used for early gene expression.

The protein resides in the virion. Its subcellular location is the host cytoplasm. It carries out the reaction RNA(n) + a ribonucleoside 5'-triphosphate = RNA(n+1) + diphosphate. Functionally, part of the DNA-dependent RNA polymerase which catalyzes the transcription of viral DNA into RNA using the four ribonucleoside triphosphates as substrates. Responsible for the transcription of early, intermediate and late genes. DNA-dependent RNA polymerase associates with the early transcription factor (ETF), itself composed of OPG118/D6 and OPG134/A8, thereby allowing the early genes transcription. Late transcription, and probably also intermediate transcription, require newly synthesized RNA polymerase. This chain is DNA-directed RNA polymerase 30 kDa polypeptide (OPG066), found in Homo sapiens (Human).